Here is a 203-residue protein sequence, read N- to C-terminus: Thymidylate kinase (203 aa).

10-17 is a binding site for ATP; the sequence is GIDGCGKT.

Belongs to the thymidylate kinase family.

It carries out the reaction dTMP + ATP = dTDP + ADP. In terms of biological role, phosphorylation of dTMP to form dTDP in both de novo and salvage pathways of dTTP synthesis. This Thermoanaerobacter pseudethanolicus (strain ATCC 33223 / 39E) (Clostridium thermohydrosulfuricum) protein is Thymidylate kinase.